A 470-amino-acid chain; its full sequence is Fumarate reductase 1 (470 aa).

Residue 6–20 (VVVIGTGLAGLAAAN) participates in FAD binding. Residue S66 is modified to Phosphoserine. Active-site residues include H249 and R272.

Belongs to the FAD-dependent oxidoreductase 2 family. FRD/SDH subfamily. The cofactor is FAD. Post-translationally, the N-terminus is blocked.

The protein resides in the cytoplasm. The catalysed reaction is succinate + NAD(+) = fumarate + NADH + H(+). In terms of biological role, irreversibly catalyzes the reduction of fumarate to succinate. Together with the second isozyme of soluble fumarate reductase (OSM1), essential for anaerobic growth. Involved in maintaining redox balance. Reduction of fumarate is the main source of succinate during fermentation, and under anaerobic conditions, the formation of succinate is strictly required for the reoxidation of FADH(2). This Saccharomyces cerevisiae (strain ATCC 204508 / S288c) (Baker's yeast) protein is Fumarate reductase 1 (FRD1).